The chain runs to 513 residues: Probable lipid II flippase MurJ (513 aa).

15 consecutive transmembrane segments (helical) span residues Ile3–Met23, Asp25–Phe45, Phe83–Ile103, Ile133–Ala153, Tyr162–Phe182, Ile186–Pro206, Ile221–Ser241, Val245–Ile265, Leu271–Leu291, Leu313–Ile333, Ile354–Phe374, Thr382–Ile402, Phe405–Leu425, Trp441–Ile461, and Leu481–Leu501.

It belongs to the MurJ/MviN family.

The protein localises to the cell inner membrane. It participates in cell wall biogenesis; peptidoglycan biosynthesis. Its function is as follows. Involved in peptidoglycan biosynthesis. Transports lipid-linked peptidoglycan precursors from the inner to the outer leaflet of the cytoplasmic membrane. This Buchnera aphidicola subsp. Baizongia pistaciae (strain Bp) protein is Probable lipid II flippase MurJ.